The chain runs to 545 residues: Eukaryotic translation initiation factor 3 subunit D-2 (545 aa).

The segment covering 99 to 113 has biased composition (basic residues); the sequence is FRGNIRNNPRTRGRT. The disordered stretch occupies residues 99-158; it reads FRGNIRNNPRTRGRTGRGGAVTGIGGNQPGVGVNERTKYGKGRDNRRQMGRRFGRNAPTR. Over residues 114 to 127 the composition is skewed to gly residues; it reads GRGGAVTGIGGNQP. Positions 133–145 are enriched in basic and acidic residues; sequence ERTKYGKGRDNRR. Residues 287–301 are RNA gate; that stretch reads QFDLLTVNETALEPP.

It belongs to the eIF-3 subunit D family. Component of the eukaryotic translation initiation factor 3 (eIF-3) complex. The eIF-3 complex interacts with pix.

Its subcellular location is the cytoplasm. In terms of biological role, mRNA cap-binding component of the eukaryotic translation initiation factor 3 (eIF-3) complex, which is involved in protein synthesis of a specialized repertoire of mRNAs and, together with other initiation factors, stimulates binding of mRNA and methionyl-tRNAi to the 40S ribosome. The eIF-3 complex specifically targets and initiates translation of a subset of mRNAs involved in cell proliferation. In the eIF-3 complex, eif3d specifically recognizes and binds the 7-methylguanosine cap of a subset of mRNAs. The polypeptide is Eukaryotic translation initiation factor 3 subunit D-2 (Drosophila persimilis (Fruit fly)).